A 1115-amino-acid polypeptide reads, in one-letter code: DNA-directed RNA polymerase subunit beta (1115 aa).

A disordered region spans residues 1084-1115 (HEAGEGEDDEYFEEDEEAVDDEPMTFDDDDME). A compositionally biased stretch (acidic residues) spans 1088–1115 (EGEDDEYFEEDEEAVDDEPMTFDDDDME).

The protein belongs to the RNA polymerase beta chain family. The RNAP catalytic core consists of 2 alpha, 1 beta, 1 beta' and 1 omega subunit. When a sigma factor is associated with the core the holoenzyme is formed, which can initiate transcription.

It carries out the reaction RNA(n) + a ribonucleoside 5'-triphosphate = RNA(n+1) + diphosphate. In terms of biological role, DNA-dependent RNA polymerase catalyzes the transcription of DNA into RNA using the four ribonucleoside triphosphates as substrates. This chain is DNA-directed RNA polymerase subunit beta, found in Desulfitobacterium hafniense (strain Y51).